The chain runs to 168 residues: Urease accessory protein UreE (168 aa).

The tract at residues 145–168 (EGGAYAAGQGGGHGPHGQHTHPHH) is disordered.

This sequence belongs to the UreE family.

The protein localises to the cytoplasm. Its function is as follows. Involved in urease metallocenter assembly. Binds nickel. Probably functions as a nickel donor during metallocenter assembly. The chain is Urease accessory protein UreE from Verminephrobacter eiseniae (strain EF01-2).